Consider the following 143-residue polypeptide: Large ribosomal subunit protein uL16 (143 aa).

Basic residues predominate over residues 1–17; sequence MLQPKRTKFRKAHKGRI. Positions 1–21 are disordered; that stretch reads MLQPKRTKFRKAHKGRIHGNA.

The protein belongs to the universal ribosomal protein uL16 family. Part of the 50S ribosomal subunit.

Its function is as follows. Binds 23S rRNA and is also seen to make contacts with the A and possibly P site tRNAs. This chain is Large ribosomal subunit protein uL16, found in Rhizorhabdus wittichii (strain DSM 6014 / CCUG 31198 / JCM 15750 / NBRC 105917 / EY 4224 / RW1) (Sphingomonas wittichii).